The sequence spans 426 residues: tRNA(Ile)-lysidine synthase (426 aa).

Serine 27 to serine 32 contacts ATP.

The protein belongs to the tRNA(Ile)-lysidine synthase family.

It is found in the cytoplasm. The enzyme catalyses cytidine(34) in tRNA(Ile2) + L-lysine + ATP = lysidine(34) in tRNA(Ile2) + AMP + diphosphate + H(+). Ligates lysine onto the cytidine present at position 34 of the AUA codon-specific tRNA(Ile) that contains the anticodon CAU, in an ATP-dependent manner. Cytidine is converted to lysidine, thus changing the amino acid specificity of the tRNA from methionine to isoleucine. The polypeptide is tRNA(Ile)-lysidine synthase (Bacteroides thetaiotaomicron (strain ATCC 29148 / DSM 2079 / JCM 5827 / CCUG 10774 / NCTC 10582 / VPI-5482 / E50)).